The chain runs to 274 residues: Large ribosomal subunit protein uL2 (274 aa).

The segment at Val223–Lys274 is disordered.

The protein belongs to the universal ribosomal protein uL2 family. In terms of assembly, part of the 50S ribosomal subunit. Forms a bridge to the 30S subunit in the 70S ribosome.

In terms of biological role, one of the primary rRNA binding proteins. Required for association of the 30S and 50S subunits to form the 70S ribosome, for tRNA binding and peptide bond formation. It has been suggested to have peptidyltransferase activity; this is somewhat controversial. Makes several contacts with the 16S rRNA in the 70S ribosome. The sequence is that of Large ribosomal subunit protein uL2 from Vibrio cholerae serotype O1 (strain M66-2).